The following is a 267-amino-acid chain: 4-hydroxy-tetrahydrodipicolinate reductase (267 aa).

NAD(+) is bound by residues 8–13 (GAAGRM), glutamate 34, 98–100 (GST), and 122–125 (APNM). Residue histidine 155 is the Proton donor/acceptor of the active site. A (S)-2,3,4,5-tetrahydrodipicolinate-binding site is contributed by histidine 156. The Proton donor role is filled by lysine 159. 165-166 (GT) is a binding site for (S)-2,3,4,5-tetrahydrodipicolinate.

The protein belongs to the DapB family.

Its subcellular location is the cytoplasm. It catalyses the reaction (S)-2,3,4,5-tetrahydrodipicolinate + NAD(+) + H2O = (2S,4S)-4-hydroxy-2,3,4,5-tetrahydrodipicolinate + NADH + H(+). It carries out the reaction (S)-2,3,4,5-tetrahydrodipicolinate + NADP(+) + H2O = (2S,4S)-4-hydroxy-2,3,4,5-tetrahydrodipicolinate + NADPH + H(+). Its pathway is amino-acid biosynthesis; L-lysine biosynthesis via DAP pathway; (S)-tetrahydrodipicolinate from L-aspartate: step 4/4. In terms of biological role, catalyzes the conversion of 4-hydroxy-tetrahydrodipicolinate (HTPA) to tetrahydrodipicolinate. The polypeptide is 4-hydroxy-tetrahydrodipicolinate reductase (Syntrophotalea carbinolica (strain DSM 2380 / NBRC 103641 / GraBd1) (Pelobacter carbinolicus)).